The chain runs to 104 residues: Protein E7 (104 aa).

Residues 1–49 (MRGNAPTLKDIILYDLPTCDPTTCDTPPVDLYCYEQFDTSDEDDEDDDQ) form an E7 terminal domain region. The short motif at 31-35 (LYCYE) is the LXCXE motif; interaction with host RB1 and TMEM173/STING element. The segment at 64–100 (CTQCGRSVKLVVSSTGADIQQLHQMLLDTLGIVCPLC) is a zinc-finger region. The Nuclear export signal signature appears at 82–90 (IQQLHQMLL).

Belongs to the papillomaviridae E7 protein family. In terms of assembly, homodimer. Homooligomer. Interacts with host RB1; this interaction induces dissociation of RB1-E2F1 complex thereby disrupting RB1 activity. Interacts with host EP300; this interaction represses EP300 transcriptional activity. Interacts with protein E2; this interaction inhibits E7 oncogenic activity. Interacts with host TMEM173/STING; this interaction impairs the ability of TMEM173/STING to sense cytosolic DNA and promote the production of type I interferon (IFN-alpha and IFN-beta). In terms of processing, highly phosphorylated.

Its subcellular location is the host cytoplasm. The protein resides in the host nucleus. Functionally, plays a role in viral genome replication by driving entry of quiescent cells into the cell cycle. Stimulation of progression from G1 to S phase allows the virus to efficiently use the cellular DNA replicating machinery to achieve viral genome replication. E7 protein has both transforming and trans-activating activities. Induces the disassembly of the E2F1 transcription factor from RB1, with subsequent transcriptional activation of E2F1-regulated S-phase genes. Interferes with host histone deacetylation mediated by HDAC1 and HDAC2, leading to transcription activation. Also plays a role in the inhibition of both antiviral and antiproliferative functions of host interferon alpha. Interaction with host TMEM173/STING impairs the ability of TMEM173/STING to sense cytosolic DNA and promote the production of type I interferon (IFN-alpha and IFN-beta). This chain is Protein E7, found in Homo sapiens (Human).